The sequence spans 119 residues: MILQQPLERGPQGRAQRDPRAASGASGGLDAREPLRKQFLSEENMATHFSRLSLHNDHPYCSPPRAFPPALPPLRSPCSELLLWRYPGNLIPEALRLLRLGDTPTPHYPASPAGDMMEL.

A disordered region spans residues 1 to 34 (MILQQPLERGPQGRAQRDPRAASGASGGLDAREP). The segment at 57 to 60 (DHPY) is interaction with HCFC1. The short motif at 91-100 (IPEALRLLRL) is the Nuclear export signal element.

Interacts with HCFC1.

The protein resides in the cytoplasm. Its subcellular location is the nucleus. Regulates HCFC1 activity by modulating its subcellular localization. Overexpression of HCFC1R1 leads to accumulation of HCFC1 in the cytoplasm. HCFC1R1-mediated export may provide the pool of cytoplasmic HCFC1 required for import of virion-derived VP16 into the nucleus. In Bos taurus (Bovine), this protein is Host cell factor C1 regulator 1 (HCFC1R1).